A 450-amino-acid polypeptide reads, in one-letter code: Homogentisate 1,2-dioxygenase (450 aa).

The active-site Proton acceptor is the His304. Residues His347 and Glu353 each contribute to the Fe cation site. 2 residues coordinate homogentisate: Tyr362 and His383. A Fe cation-binding site is contributed by His383.

This sequence belongs to the homogentisate dioxygenase family. Hexamer; dimer of trimers. The cofactor is Fe cation.

The catalysed reaction is homogentisate + O2 = 4-maleylacetoacetate + H(+). Its pathway is amino-acid degradation; L-phenylalanine degradation; acetoacetate and fumarate from L-phenylalanine: step 4/6. In terms of biological role, involved in the catabolism of homogentisate (2,5-dihydroxyphenylacetate or 2,5-OH-PhAc), a central intermediate in the degradation of phenylalanine and tyrosine. Catalyzes the oxidative ring cleavage of the aromatic ring of homogentisate to yield maleylacetoacetate. This chain is Homogentisate 1,2-dioxygenase, found in Burkholderia thailandensis (strain ATCC 700388 / DSM 13276 / CCUG 48851 / CIP 106301 / E264).